Consider the following 180-residue polypeptide: Inner membrane-spanning protein YciB (180 aa).

6 helical membrane-spanning segments follow: residues 4–24 (LLSEIGPVVAFFAGFFYGGGI), 25–45 (QSATLYMLITSVICITLCYII), 52–72 (LSIISTAVLLVSGIITLISGD), 76–96 (IKIKPTILYVIFGIIFLTSGI), 118–138 (ITLSYRTATFFFFMAIVNEIV), and 150–170 (FKVFGVVPITFVFILLQLPLL).

It belongs to the YciB family.

It localises to the cell inner membrane. Its function is as follows. Plays a role in cell envelope biogenesis, maintenance of cell envelope integrity and membrane homeostasis. This Rickettsia bellii (strain RML369-C) protein is Inner membrane-spanning protein YciB.